Reading from the N-terminus, the 375-residue chain is DNA replication and repair protein RecF (375 aa).

30 to 37 (GKNAQGKT) is a binding site for ATP.

It belongs to the RecF family.

Its subcellular location is the cytoplasm. Its function is as follows. The RecF protein is involved in DNA metabolism; it is required for DNA replication and normal SOS inducibility. RecF binds preferentially to single-stranded, linear DNA. It also seems to bind ATP. The chain is DNA replication and repair protein RecF from Lactobacillus acidophilus (strain ATCC 700396 / NCK56 / N2 / NCFM).